We begin with the raw amino-acid sequence, 433 residues long: MNKNIVILGTQWGDEGKGKVVDCLTKDSSYVVRYQGGHNAGHTLVVNDKKIILHLIPSGLLHKNVIGIIANGVVVSPFELIKEIKMLETHNIFVHKRLFISNSSPLILQYHIEMDIAREKKLGISALGTTGRGIGPAYEDKIARRALRIGDLKNEKTLSIRLEKIVNYYNHQLVSFYKHKPVDYKIILRDLLPTIDLIYDMIKDTTSILHTAIQSNKKIIFEGAQGSFLDIDHGTYPYVTSSNSTIGGVITGTGVGSKSLDYILGVTKAYSTRVGYGPFPTELFDDVDKHFSKKGHEFGSTTGRKRRTGWLDAVALCRSVRINSLSGLCITKLDVLDGLYEIKICTAYKNINTLEIISFPDIDEWKNIEPIYETYPGWNKKTLGIKKLIDLPYEARNYINRIEEITQIPVDIISTGPDRSDIIFVRDIFFIKK.

GTP contacts are provided by residues 13 to 19 and 41 to 43; these read GDEGKGK and GHT. Residue Asp14 is the Proton acceptor of the active site. Residues Asp14 and Gly41 each coordinate Mg(2+). Residues 14 to 17, 39 to 42, Thr130, Arg144, Gln225, Thr240, and Arg304 each bind IMP; these read DEGK and NAGH. His42 serves as the catalytic Proton donor. 300-306 contributes to the substrate binding site; it reads STTGRKR. GTP-binding positions include Arg306, 332–334, and 414–416; these read KLD and STG.

It belongs to the adenylosuccinate synthetase family. As to quaternary structure, homodimer. The cofactor is Mg(2+).

It is found in the cytoplasm. The enzyme catalyses IMP + L-aspartate + GTP = N(6)-(1,2-dicarboxyethyl)-AMP + GDP + phosphate + 2 H(+). The protein operates within purine metabolism; AMP biosynthesis via de novo pathway; AMP from IMP: step 1/2. Its function is as follows. Plays an important role in the de novo pathway of purine nucleotide biosynthesis. Catalyzes the first committed step in the biosynthesis of AMP from IMP. The sequence is that of Adenylosuccinate synthetase from Buchnera aphidicola subsp. Acyrthosiphon pisum (strain Tuc7).